The following is a 94-amino-acid chain: Small ribosomal subunit protein bS18 (94 aa).

This sequence belongs to the bacterial ribosomal protein bS18 family. In terms of assembly, part of the 30S ribosomal subunit. Forms a tight heterodimer with protein bS6.

Functionally, binds as a heterodimer with protein bS6 to the central domain of the 16S rRNA, where it helps stabilize the platform of the 30S subunit. In Rickettsia bellii (strain OSU 85-389), this protein is Small ribosomal subunit protein bS18.